The primary structure comprises 971 residues: Reversion-inducing cysteine-rich protein with Kazal motifs (971 aa).

The signal sequence occupies residues 1–22 (MASVRASPRSALLLLLAAAGVA). One copy of the Knot 1 repeat lies at 37-84 (CCNHSKDNQMCRDVCEQIFSSKSESRLKHLLQRAPDYCPETMVEIWSC). The segment at 37–338 (CCNHSKDNQM…NPVEVSMLTC (302 aa)) is 5 X Knot repeats. 2 N-linked (GlcNAc...) asparagine glycosylation sites follow: Asn39 and Asn86. Knot repeat units lie at residues 104–141 (CCEL…LFSC) and 151–197 (CCSY…LIHC). The N-linked (GlcNAc...) asparagine glycan is linked to Asn200. Knot repeat units lie at residues 216 to 263 (CCDR…LWQC) and 292 to 338 (CCSK…MLTC). Asn297 and Asn352 each carry an N-linked (GlcNAc...) asparagine glycan. Kazal-like domains lie at 627-673 (TFTG…PCIS), 698-752 (TFDK…PCQP), and 753-789 (FCRA…PCQA). Cystine bridges form between Cys633–Cys658, Cys635–Cys654, Cys643–Cys671, Cys716–Cys735, Cys724–Cys750, and Cys761–Cys787. A Kazal-like 2; degenerate domain is found at 704-750 (CSQYECVPRQLTCDQARDPVCDTDHMEHSNLCTLYQRGKSLSYRGPC). Residue Ser942 is the site of GPI-anchor amidated serine attachment. A propeptide spans 943–971 (SAVVGRPLFHSLLLLLSLGLTVHLLWTRP) (removed in mature form).

It belongs to the RECK family. In terms of assembly, interacts (via knot repeats) with WNT7A (via disordered linker region); the interaction is direct. Interacts (via knot repeats) with WNT7B (via disordered linker region); the interaction is direct. Interacts with ADGRA2; the interaction is direct. Interacts with MMP9.

It is found in the cell membrane. In terms of biological role, functions together with ADGRA2 to enable brain endothelial cells to selectively respond to Wnt7 signals (WNT7A or WNT7B). Plays a key role in Wnt7-specific responses: required for central nervous system (CNS) angiogenesis and blood-brain barrier regulation. Acts as a Wnt7-specific coactivator of canonical Wnt signaling by decoding Wnt ligands: acts by interacting specifically with the disordered linker region of Wnt7, thereby conferring ligand selectivity for Wnt7. ADGRA2 is then required to deliver RECK-bound Wnt7 to frizzled by assembling a higher-order RECK-ADGRA2-Fzd-LRP5-LRP6 complex. Also acts as a serine protease inhibitor: negatively regulates matrix metalloproteinase-9 (MMP9) by suppressing MMP9 secretion and by direct inhibition of its enzymatic activity. Also inhibits metalloproteinase activity of MMP2 and MMP14 (MT1-MMP). In Mus musculus (Mouse), this protein is Reversion-inducing cysteine-rich protein with Kazal motifs.